We begin with the raw amino-acid sequence, 381 residues long: Erythronate-4-phosphate dehydrogenase (381 aa).

Residues S45 and T67 each coordinate substrate. Residues 127 to 128 (QV), D147, and T176 each bind NAD(+). R209 is an active-site residue. D233 serves as a coordination point for NAD(+). E238 is an active-site residue. The Proton donor role is filled by H255. G258 is a binding site for NAD(+). Position 259 (Y259) interacts with substrate.

This sequence belongs to the D-isomer specific 2-hydroxyacid dehydrogenase family. PdxB subfamily. In terms of assembly, homodimer.

The protein localises to the cytoplasm. The catalysed reaction is 4-phospho-D-erythronate + NAD(+) = (R)-3-hydroxy-2-oxo-4-phosphooxybutanoate + NADH + H(+). Its pathway is cofactor biosynthesis; pyridoxine 5'-phosphate biosynthesis; pyridoxine 5'-phosphate from D-erythrose 4-phosphate: step 2/5. In terms of biological role, catalyzes the oxidation of erythronate-4-phosphate to 3-hydroxy-2-oxo-4-phosphonooxybutanoate. The chain is Erythronate-4-phosphate dehydrogenase from Vibrio cholerae serotype O1 (strain ATCC 39315 / El Tor Inaba N16961).